The primary structure comprises 428 residues: Ribosomal RNA small subunit methyltransferase B (428 aa).

S-adenosyl-L-methionine contacts are provided by residues 253-259 (CAAPGGK), Asp276, Asp302, and Asp321. Residue Cys374 is the Nucleophile of the active site.

This sequence belongs to the class I-like SAM-binding methyltransferase superfamily. RsmB/NOP family.

Its subcellular location is the cytoplasm. It carries out the reaction cytidine(967) in 16S rRNA + S-adenosyl-L-methionine = 5-methylcytidine(967) in 16S rRNA + S-adenosyl-L-homocysteine + H(+). In terms of biological role, specifically methylates the cytosine at position 967 (m5C967) of 16S rRNA. In Enterobacter sp. (strain 638), this protein is Ribosomal RNA small subunit methyltransferase B.